A 207-amino-acid chain; its full sequence is ATP-dependent Clp protease proteolytic subunit (207 aa).

S111 functions as the Nucleophile in the catalytic mechanism. H136 is a catalytic residue.

Belongs to the peptidase S14 family. As to quaternary structure, fourteen ClpP subunits assemble into 2 heptameric rings which stack back to back to give a disk-like structure with a central cavity, resembling the structure of eukaryotic proteasomes.

The protein localises to the cytoplasm. The enzyme catalyses Hydrolysis of proteins to small peptides in the presence of ATP and magnesium. alpha-casein is the usual test substrate. In the absence of ATP, only oligopeptides shorter than five residues are hydrolyzed (such as succinyl-Leu-Tyr-|-NHMec, and Leu-Tyr-Leu-|-Tyr-Trp, in which cleavage of the -Tyr-|-Leu- and -Tyr-|-Trp bonds also occurs).. In terms of biological role, cleaves peptides in various proteins in a process that requires ATP hydrolysis. Has a chymotrypsin-like activity. Plays a major role in the degradation of misfolded proteins. This Aliivibrio salmonicida (strain LFI1238) (Vibrio salmonicida (strain LFI1238)) protein is ATP-dependent Clp protease proteolytic subunit.